A 196-amino-acid chain; its full sequence is Holliday junction branch migration complex subunit RuvA (196 aa).

The segment at 1–63 is domain I; sequence MYDYIKGTLV…DDAHLLFGFH (63 aa). The interval 64 to 142 is domain II; it reads TEDEKEVFLK…ELPAETTNTT (79 aa). The flexible linker stretch occupies residues 143–146; sequence ANQT. Residues 147–196 form a domain III region; the sequence is AGNQQLDEAMEALLALGYKSTELKKVKAFFEDTNETAEQYIKSALKMLMK.

It belongs to the RuvA family. As to quaternary structure, homotetramer. Forms an RuvA(8)-RuvB(12)-Holliday junction (HJ) complex. HJ DNA is sandwiched between 2 RuvA tetramers; dsDNA enters through RuvA and exits via RuvB. An RuvB hexamer assembles on each DNA strand where it exits the tetramer. Each RuvB hexamer is contacted by two RuvA subunits (via domain III) on 2 adjacent RuvB subunits; this complex drives branch migration. In the full resolvosome a probable DNA-RuvA(4)-RuvB(12)-RuvC(2) complex forms which resolves the HJ.

Its subcellular location is the cytoplasm. The RuvA-RuvB-RuvC complex processes Holliday junction (HJ) DNA during genetic recombination and DNA repair, while the RuvA-RuvB complex plays an important role in the rescue of blocked DNA replication forks via replication fork reversal (RFR). RuvA specifically binds to HJ cruciform DNA, conferring on it an open structure. The RuvB hexamer acts as an ATP-dependent pump, pulling dsDNA into and through the RuvAB complex. HJ branch migration allows RuvC to scan DNA until it finds its consensus sequence, where it cleaves and resolves the cruciform DNA. The chain is Holliday junction branch migration complex subunit RuvA from Streptococcus thermophilus (strain CNRZ 1066).